The primary structure comprises 682 residues: Potassium-transporting ATPase ATP-binding subunit (682 aa).

4 helical membrane passes run 35 to 55, 62 to 82, 219 to 239, and 254 to 274; these read VMFI…AMAG, ATFT…ANFA, IALT…TATI, and VLVA…LSAI. The active-site 4-aspartylphosphate intermediate is Asp307. Residues Asp344, Glu348, 377-384, and Lys395 each bind ATP; that span reads FTAQTRMS. Residues Asp518 and Asp522 each contribute to the Mg(2+) site. 3 helical membrane passes run 588–608, 616–636, and 656–676; these read FAII…LNVM, AILS…PLAL, and IYGL…DLLL.

Belongs to the cation transport ATPase (P-type) (TC 3.A.3) family. Type IA subfamily. In terms of assembly, the system is composed of three essential subunits: KdpA, KdpB and KdpC.

Its subcellular location is the cell inner membrane. It catalyses the reaction K(+)(out) + ATP + H2O = K(+)(in) + ADP + phosphate + H(+). Its function is as follows. Part of the high-affinity ATP-driven potassium transport (or Kdp) system, which catalyzes the hydrolysis of ATP coupled with the electrogenic transport of potassium into the cytoplasm. This subunit is responsible for energy coupling to the transport system and for the release of the potassium ions to the cytoplasm. The sequence is that of Potassium-transporting ATPase ATP-binding subunit from Klebsiella pneumoniae subsp. pneumoniae (strain ATCC 700721 / MGH 78578).